A 217-amino-acid polypeptide reads, in one-letter code: Protein-L-isoaspartate O-methyltransferase (217 aa).

Residue S59 is part of the active site.

It belongs to the methyltransferase superfamily. L-isoaspartyl/D-aspartyl protein methyltransferase family.

The protein localises to the cytoplasm. The enzyme catalyses [protein]-L-isoaspartate + S-adenosyl-L-methionine = [protein]-L-isoaspartate alpha-methyl ester + S-adenosyl-L-homocysteine. In terms of biological role, catalyzes the methyl esterification of L-isoaspartyl residues in peptides and proteins that result from spontaneous decomposition of normal L-aspartyl and L-asparaginyl residues. It plays a role in the repair and/or degradation of damaged proteins. This chain is Protein-L-isoaspartate O-methyltransferase (pcm), found in Methanothermobacter thermautotrophicus (strain ATCC 29096 / DSM 1053 / JCM 10044 / NBRC 100330 / Delta H) (Methanobacterium thermoautotrophicum).